The following is a 375-amino-acid chain: Alanine racemase (375 aa).

Lysine 40 (proton acceptor; specific for D-alanine) is an active-site residue. Lysine 40 bears the N6-(pyridoxal phosphate)lysine mark. Arginine 140 is a binding site for substrate. Tyrosine 268 serves as the catalytic Proton acceptor; specific for L-alanine. Methionine 315 lines the substrate pocket.

It belongs to the alanine racemase family. The cofactor is pyridoxal 5'-phosphate.

The catalysed reaction is L-alanine = D-alanine. The protein operates within amino-acid biosynthesis; D-alanine biosynthesis; D-alanine from L-alanine: step 1/1. Functionally, catalyzes the interconversion of L-alanine and D-alanine. May also act on other amino acids. The protein is Alanine racemase (alr) of Limosilactobacillus reuteri (strain DSM 20016) (Lactobacillus reuteri).